A 31-amino-acid chain; its full sequence is Cycloviolacin-O19 (31 aa).

The cyclopeptide (Gly-Asp) cross-link spans 1–31 (GTLPCGESCVWIPCISSVVGCSCKSKVCYKD). 3 disulfide bridges follow: Cys5–Cys21, Cys9–Cys23, and Cys14–Cys28.

In terms of processing, this is a cyclic peptide. Expressed in petioles and runners but not in leaves, petals and roots (at protein level).

Functionally, probably participates in a plant defense mechanism. This chain is Cycloviolacin-O19, found in Viola odorata (Sweet violet).